Here is a 1574-residue protein sequence, read N- to C-terminus: Disco-interacting protein 2 homolog B (1574 aa).

3 positions are modified to phosphoserine: Ser-9, Ser-50, and Ser-53. In terms of domain architecture, DMAP1-binding spans 12–130 (AVAALPPEVR…PMPTKRRSTF (119 aa)). Residues 31-166 (LSEGDITQKG…AALSAALQQS (136 aa)) form a disordered region. Polar residues predominate over residues 52–62 (YSPQTQETDSI). The span at 69–82 (QTPAPTAAQTSAPS) shows a compositional bias: low complexity. The residue at position 70 (Thr-70) is a Phosphothreonine. Positions 91 to 103 (GARDERYRSDIHT) are enriched in basic and acidic residues. At Ser-99 the chain carries Phosphoserine. Residue Thr-139 is modified to Phosphothreonine. A phosphoserine mark is found at Ser-145, Ser-147, and Ser-152. Positions 154–166 (RRQAALSAALQQS) are enriched in low complexity. A phosphoserine mark is found at Ser-177, Ser-192, and Ser-202. The segment at 178-200 (IQGSSTSSSASSTLSHGEVKGTS) is disordered. Residues 181–192 (SSTSSSASSTLS) are compositionally biased toward low complexity. The disordered stretch occupies residues 217-244 (APPDVTATTSSSSSSLRPANIDLPPSGI). The residue at position 256 (Ser-256) is a Phosphoserine.

Belongs to the DIP2 family. As to quaternary structure, interacts with alpha-tubulin. Highly expressed in brain and spinal cord (at protein level). In brain, expression is detected in the main olfactory bulb, cortex, lateral ventricle, cornu ammonis 1, cornu ammonis 3, dentate gyrus, striatum, cerebellar cortex and medial habenula. Expressed primarily in neurons including excitatory pyramidal neurons and inhibitory interneurons.

The protein resides in the cell projection. It is found in the dendrite. It localises to the axon. The protein localises to the perikaryon. Negatively regulates axonal outgrowth and is essential for normal synaptic transmission. Not required for regulation of axon polarity. Promotes acetylation of alpha-tubulin. This chain is Disco-interacting protein 2 homolog B (Dip2b), found in Mus musculus (Mouse).